The sequence spans 243 residues: uncharacterized protein (243 aa).

Residues Cys-120 and Cys-157 each coordinate [4Fe-4S] cluster.

In terms of assembly, homodimer. Requires [4Fe-4S] cluster as cofactor.

This is an uncharacterized protein from Methanocaldococcus jannaschii (strain ATCC 43067 / DSM 2661 / JAL-1 / JCM 10045 / NBRC 100440) (Methanococcus jannaschii).